We begin with the raw amino-acid sequence, 219 residues long: Probable GTP-binding protein EngB (219 aa).

The 178-residue stretch at 42–219 (SVPEIAFAGR…RTAVLEAVEL (178 aa)) folds into the EngB-type G domain. GTP-binding positions include 50–57 (GRSNVGKS), 77–81 (GRTQE), 97–100 (DMPG), 164–167 (TKAD), and 198–200 (TSS). Mg(2+) contacts are provided by Ser-57 and Thr-79.

It belongs to the TRAFAC class TrmE-Era-EngA-EngB-Septin-like GTPase superfamily. EngB GTPase family. The cofactor is Mg(2+).

Its function is as follows. Necessary for normal cell division and for the maintenance of normal septation. In Sphingopyxis alaskensis (strain DSM 13593 / LMG 18877 / RB2256) (Sphingomonas alaskensis), this protein is Probable GTP-binding protein EngB.